A 337-amino-acid polypeptide reads, in one-letter code: Holliday junction branch migration complex subunit RuvB (337 aa).

A large ATPase domain (RuvB-L) region spans residues Ala-4–Tyr-186. Residues Arg-26, Gly-67, Lys-70, Thr-71, Thr-72, Glu-133 to Tyr-135, Arg-176, Tyr-186, and Arg-223 each bind ATP. Thr-71 provides a ligand contact to Mg(2+). Residues Asn-187–Asp-257 are small ATPAse domain (RuvB-S). The tract at residues Ala-260–Ala-337 is head domain (RuvB-H). Residues Arg-296, Arg-315, and Arg-320 each coordinate DNA.

It belongs to the RuvB family. As to quaternary structure, homohexamer. Forms an RuvA(8)-RuvB(12)-Holliday junction (HJ) complex. HJ DNA is sandwiched between 2 RuvA tetramers; dsDNA enters through RuvA and exits via RuvB. An RuvB hexamer assembles on each DNA strand where it exits the tetramer. Each RuvB hexamer is contacted by two RuvA subunits (via domain III) on 2 adjacent RuvB subunits; this complex drives branch migration. In the full resolvosome a probable DNA-RuvA(4)-RuvB(12)-RuvC(2) complex forms which resolves the HJ.

It is found in the cytoplasm. It carries out the reaction ATP + H2O = ADP + phosphate + H(+). Functionally, the RuvA-RuvB-RuvC complex processes Holliday junction (HJ) DNA during genetic recombination and DNA repair, while the RuvA-RuvB complex plays an important role in the rescue of blocked DNA replication forks via replication fork reversal (RFR). RuvA specifically binds to HJ cruciform DNA, conferring on it an open structure. The RuvB hexamer acts as an ATP-dependent pump, pulling dsDNA into and through the RuvAB complex. RuvB forms 2 homohexamers on either side of HJ DNA bound by 1 or 2 RuvA tetramers; 4 subunits per hexamer contact DNA at a time. Coordinated motions by a converter formed by DNA-disengaged RuvB subunits stimulates ATP hydrolysis and nucleotide exchange. Immobilization of the converter enables RuvB to convert the ATP-contained energy into a lever motion, pulling 2 nucleotides of DNA out of the RuvA tetramer per ATP hydrolyzed, thus driving DNA branch migration. The RuvB motors rotate together with the DNA substrate, which together with the progressing nucleotide cycle form the mechanistic basis for DNA recombination by continuous HJ branch migration. Branch migration allows RuvC to scan DNA until it finds its consensus sequence, where it cleaves and resolves cruciform DNA. The sequence is that of Holliday junction branch migration complex subunit RuvB from Shewanella halifaxensis (strain HAW-EB4).